Consider the following 453-residue polypeptide: Bifunctional protein GlmU (453 aa).

Residues 1–225 (MNIVILAAGT…EWETLGVNSK (225 aa)) are pyrophosphorylase. Residues 6–9 (LAAG), Lys-20, Gln-71, 76–77 (GT), 98–100 (YGD), Gly-135, Glu-150, Asn-165, and Asn-223 each bind UDP-N-acetyl-alpha-D-glucosamine. Asp-100 provides a ligand contact to Mg(2+). Asn-223 is a Mg(2+) binding site. The linker stretch occupies residues 226–246 (QQLAELERIHQRNVADALLVA). The interval 247-453 (GVTLADPARL…GYVRPTKKKS (207 aa)) is N-acetyltransferase. The UDP-N-acetyl-alpha-D-glucosamine site is built by Arg-329 and Lys-347. The Proton acceptor role is filled by His-359. Residues Tyr-362 and Asn-373 each contribute to the UDP-N-acetyl-alpha-D-glucosamine site. Residues Ala-376, 382-383 (NY), Ser-401, and Ala-419 each bind acetyl-CoA.

In the N-terminal section; belongs to the N-acetylglucosamine-1-phosphate uridyltransferase family. This sequence in the C-terminal section; belongs to the transferase hexapeptide repeat family. In terms of assembly, homotrimer. Mg(2+) serves as cofactor.

It localises to the cytoplasm. The catalysed reaction is alpha-D-glucosamine 1-phosphate + acetyl-CoA = N-acetyl-alpha-D-glucosamine 1-phosphate + CoA + H(+). The enzyme catalyses N-acetyl-alpha-D-glucosamine 1-phosphate + UTP + H(+) = UDP-N-acetyl-alpha-D-glucosamine + diphosphate. It functions in the pathway nucleotide-sugar biosynthesis; UDP-N-acetyl-alpha-D-glucosamine biosynthesis; N-acetyl-alpha-D-glucosamine 1-phosphate from alpha-D-glucosamine 6-phosphate (route II): step 2/2. The protein operates within nucleotide-sugar biosynthesis; UDP-N-acetyl-alpha-D-glucosamine biosynthesis; UDP-N-acetyl-alpha-D-glucosamine from N-acetyl-alpha-D-glucosamine 1-phosphate: step 1/1. Its pathway is bacterial outer membrane biogenesis; LPS lipid A biosynthesis. Catalyzes the last two sequential reactions in the de novo biosynthetic pathway for UDP-N-acetylglucosamine (UDP-GlcNAc). The C-terminal domain catalyzes the transfer of acetyl group from acetyl coenzyme A to glucosamine-1-phosphate (GlcN-1-P) to produce N-acetylglucosamine-1-phosphate (GlcNAc-1-P), which is converted into UDP-GlcNAc by the transfer of uridine 5-monophosphate (from uridine 5-triphosphate), a reaction catalyzed by the N-terminal domain. The sequence is that of Bifunctional protein GlmU from Paraburkholderia xenovorans (strain LB400).